We begin with the raw amino-acid sequence, 889 residues long: Extended synaptotagmin-3 (889 aa).

Residues M1 to A65 are disordered. Topologically, residues M1–G66 are cytoplasmic. Composition is skewed to basic and acidic residues over residues T17–E28 and P41–R58. Helical transmembrane passes span E67–Y91 and L92–F112. Over W113 to S889 the chain is Cytoplasmic. The SMP-LTD domain occupies D155–S333. C2 domains lie at P331–F452 and W468–K618. Positions 363, 364, 376, 423, 424, 425, 427, 429, and 430 each coordinate Ca(2+). The tract at residues S649–S724 is disordered. A compositionally biased stretch (basic residues) spans H658–A671. Low complexity-rich tracts occupy residues H672–Q682 and I691–T714. The C2 3 domain maps to M757–F879. Residues R804–K811 are required for phosphatidylinositol 4,5-bisphosphate-dependent location at the cell membrane.

The protein belongs to the extended synaptotagmin family.

It localises to the cell membrane. The protein resides in the endoplasmic reticulum membrane. Functionally, tethers the endoplasmic reticulum to the cell membrane and promotes the formation of appositions between the endoplasmic reticulum and the cell membrane. Binds glycerophospholipids in a barrel-like domain and may play a role in cellular lipid transport. This Xenopus tropicalis (Western clawed frog) protein is Extended synaptotagmin-3 (esyt3).